A 76-amino-acid polypeptide reads, in one-letter code: ATP synthase subunit 9, mitochondrial (76 aa).

2 consecutive transmembrane segments (helical) span residues Ile10–Phe30 and Ile52–Leu72.

The protein belongs to the ATPase C chain family. F-type ATPases have 2 components, CF(1) - the catalytic core - and CF(0) - the membrane proton channel. CF(1) has five subunits: alpha(3), beta(3), gamma(1), delta(1), epsilon(1). CF(0) has three main subunits: a, b and c.

The protein localises to the mitochondrion membrane. Mitochondrial membrane ATP synthase (F(1)F(0) ATP synthase or Complex V) produces ATP from ADP in the presence of a proton gradient across the membrane which is generated by electron transport complexes of the respiratory chain. F-type ATPases consist of two structural domains, F(1) - containing the extramembraneous catalytic core and F(0) - containing the membrane proton channel, linked together by a central stalk and a peripheral stalk. During catalysis, ATP synthesis in the catalytic domain of F(1) is coupled via a rotary mechanism of the central stalk subunits to proton translocation. Part of the complex F(0) domain. A homomeric c-ring of probably 10 subunits is part of the complex rotary element. The chain is ATP synthase subunit 9, mitochondrial (ATP9) from Kluyveromyces lactis (strain ATCC 8585 / CBS 2359 / DSM 70799 / NBRC 1267 / NRRL Y-1140 / WM37) (Yeast).